We begin with the raw amino-acid sequence, 198 residues long: HTH-type transcriptional repressor DhaR (198 aa).

The 61-residue stretch at 4–64 (TPVRQHLVEK…QVLQEFFSDL (61 aa)) folds into the HTH tetR-type domain.

Functionally, transcriptional repressor for the dhaA haloalkane dehalogenase gene. The polypeptide is HTH-type transcriptional repressor DhaR (dhaR) (Mycobacterium sp. (strain GP1)).